The sequence spans 481 residues: GTPase Der (481 aa).

EngA-type G domains lie at 3-166 (PVVA…ESDF) and 194-367 (IKLA…MSAT). Residues 9–16 (GRPNVGKS), 56–60 (DTGGI), 118–121 (NKVD), 200–207 (GKPNVGKS), 247–251 (DTAGV), and 312–315 (NKWD) contribute to the GTP site. The 85-residue stretch at 368–452 (KRINTALLTQ…PIKIEFREGN (85 aa)) folds into the KH-like domain.

This sequence belongs to the TRAFAC class TrmE-Era-EngA-EngB-Septin-like GTPase superfamily. EngA (Der) GTPase family. In terms of assembly, associates with the 50S ribosomal subunit.

GTPase that plays an essential role in the late steps of ribosome biogenesis. This Alteromonas mediterranea (strain DSM 17117 / CIP 110805 / LMG 28347 / Deep ecotype) protein is GTPase Der.